The chain runs to 229 residues: Large ribosomal subunit protein uL1 (229 aa).

Belongs to the universal ribosomal protein uL1 family. As to quaternary structure, part of the 50S ribosomal subunit.

In terms of biological role, binds directly to 23S rRNA. The L1 stalk is quite mobile in the ribosome, and is involved in E site tRNA release. Its function is as follows. Protein L1 is also a translational repressor protein, it controls the translation of the L11 operon by binding to its mRNA. This is Large ribosomal subunit protein uL1 from Streptococcus equi subsp. zooepidemicus (strain MGCS10565).